An 858-amino-acid polypeptide reads, in one-letter code: DNA mismatch repair protein MutS (858 aa).

613–620 lines the ATP pocket; the sequence is GPNMAGKS.

It belongs to the DNA mismatch repair MutS family.

This protein is involved in the repair of mismatches in DNA. It is possible that it carries out the mismatch recognition step. This protein has a weak ATPase activity. This chain is DNA mismatch repair protein MutS, found in Dehalococcoides mccartyi (strain ATCC BAA-2100 / JCM 16839 / KCTC 5957 / BAV1).